Here is a 296-residue protein sequence, read N- to C-terminus: MRRSLTAGLALVLIAGAAGLWLTRPVKSDPELFAGLTGEASRGERIFWAGGCASCHAAPDASGEARLVLSGGERLTTDFGTFVVPNISPDPDHGIGGWTVADLDSALRHGTSPERSHYYPSFPYTSYAHVEPQDVADLKAFLDTLPPSDRADEPHDLAFPFNQRIILGGWKLLAGGPSWIVEGDLAPEEERGRYLVEGLGHCGECHTPRNGLGLRDKSRWLAGGPNPEGRGTIPNITPAKLDWSAGDIAEYLSSGFTPDYDSAGGQMADVVRNTSQLPDEDRRAIAAYLKRVPAIE.

Cys52, Cys55, His56, Cys202, Cys205, and His206 together coordinate heme c.

Post-translationally, binds 2 heme c groups covalently per subunit.

It localises to the cell membrane. Its function is as follows. Particularly expressed when cells generate energy via aerobic respiration. In Cereibacter sphaeroides (strain ATCC 17023 / DSM 158 / JCM 6121 / CCUG 31486 / LMG 2827 / NBRC 12203 / NCIMB 8253 / ATH 2.4.1.) (Rhodobacter sphaeroides), this protein is Diheme cytochrome c-type (cycG).